A 422-amino-acid polypeptide reads, in one-letter code: 5'-deoxyadenosine deaminase (422 aa).

2 residues coordinate Zn(2+): His57 and His59. Positions 86 and 178 each coordinate substrate. His205 is a binding site for Zn(2+). The substrate site is built by Glu208 and Asp294. Asp294 lines the Zn(2+) pocket.

The protein belongs to the metallo-dependent hydrolases superfamily. MTA/SAH deaminase family. Homotetramer. It depends on Zn(2+) as a cofactor.

It catalyses the reaction 5'-deoxyadenosine + H2O + H(+) = 5'-deoxyinosine + NH4(+). The catalysed reaction is S-adenosyl-L-homocysteine + H2O + H(+) = S-inosyl-L-homocysteine + NH4(+). The enzyme catalyses S-methyl-5'-thioadenosine + H2O + H(+) = S-methyl-5'-thioinosine + NH4(+). It carries out the reaction adenosine + H2O + H(+) = inosine + NH4(+). Its pathway is amino-acid biosynthesis; S-adenosyl-L-methionine biosynthesis. Catalyzes the deamination of three SAM-derived enzymatic products, namely 5'-deoxyadenosine, S-adenosyl-L-homocysteine, and 5'-methylthioadenosine, to produce the inosine analogs. Can also deaminate adenosine. The preferred substrate for this enzyme is 5'-deoxyadenosine, but all these substrates are efficiently deaminated. Likely functions in a S-adenosyl-L-methionine (SAM) recycling pathway from S-adenosyl-L-homocysteine (SAH) produced from SAM-dependent methylation reactions. May also be involved in the recycling of 5'-deoxyadenosine, whereupon the 5'-deoxyribose moiety of 5'-deoxyinosine is further metabolized to deoxyhexoses used for the biosynthesis of aromatic amino acids in methanogens. The protein is 5'-deoxyadenosine deaminase of Methanococcus maripaludis (strain C6 / ATCC BAA-1332).